The sequence spans 311 residues: Protein lifeguard 3 (311 aa).

Disordered stretches follow at residues 1–37 (MSNPSAPPPYEDRNPLYPGPPPPGGYGQPSVLPGGYP) and 50–72 (PAGYPQPMPPTHPMPMNYGPGHG). Positions 53 to 62 (YPQPMPPTHP) are enriched in pro residues. A phosphoserine mark is found at Ser-81 and Ser-83. 7 helical membrane-spanning segments follow: residues 110–130 (LLITVAIIAIFTFVEPVSAFV), 134–154 (VAVYYVSYAVFVVTYLILACC), 165–185 (IILLTLFTFAMGFMTGTISSM), 190–210 (AVIIAMIITAVVSISVTIFCF), 221–241 (GLFCVLGIVLLVTGIVTSIVL), 246–266 (VYWLHMLYAALGAICFTLFLA), and 286–306 (ITGALQIYTDIIYIFTFVLQL).

The protein belongs to the BI1 family. LFG subfamily.

Its subcellular location is the membrane. The protein localises to the lysosome membrane. The protein resides in the endosome membrane. Functionally, negatively regulates aortic matrix metalloproteinase-9 (MMP9) production and may play a protective role in vascular remodeling. This Homo sapiens (Human) protein is Protein lifeguard 3 (TMBIM1).